The chain runs to 326 residues: Eukaryotic translation initiation factor 3 subunit I (326 aa).

WD repeat units lie at residues 8-47 (GHERSITQIKYNREGDLLFSCSKDQKPNVWYSLNGERLGT), 50-89 (GHQGAVWCLDVDWESRKLITGAGDMTTKLWDVEYGTIIAS), 145-184 (MTESKITSMQWGPLDETIITGHDNGNIAIWDVRKGQKVVD), 188-227 (DHAAGINDMQLSKDGTMFVTASRDTTAKLFDSESLMCLKT), and 285-326 (GHFG…NIFE).

It belongs to the eIF-3 subunit I family. In terms of assembly, component of the eukaryotic translation initiation factor 3 (eIF-3) complex. The eIF-3 complex interacts with pix.

It localises to the cytoplasm. Its function is as follows. Component of the eukaryotic translation initiation factor 3 (eIF-3) complex, which is involved in protein synthesis of a specialized repertoire of mRNAs and, together with other initiation factors, stimulates binding of mRNA and methionyl-tRNAi to the 40S ribosome. The eIF-3 complex specifically targets and initiates translation of a subset of mRNAs involved in cell proliferation. This is Eukaryotic translation initiation factor 3 subunit I from Drosophila pseudoobscura pseudoobscura (Fruit fly).